Reading from the N-terminus, the 49-residue chain is Sperm protamine P1 (49 aa).

Residues 1–49 (MARYRCCRSHSRSRCRRRRRRSRRRRRRSCGRRRRAGYRRYTVRYRRRR) form a disordered region.

This sequence belongs to the protamine P1 family. In terms of tissue distribution, testis.

The protein resides in the nucleus. Its subcellular location is the chromosome. Protamines substitute for histones in the chromatin of sperm during the haploid phase of spermatogenesis. They compact sperm DNA into a highly condensed, stable and inactive complex. The polypeptide is Sperm protamine P1 (PRM1) (Macronycteris commersonii (Commerson's roundleaf bat)).